We begin with the raw amino-acid sequence, 315 residues long: Protein-methionine-sulfoxide reductase catalytic subunit MsrP (315 aa).

The tat-type signal signal peptide spans 1–45 (MPSYRPPKIASSEITPRQVYLRRREFLGAATLGAMALYGAGKASA). Mo-molybdopterin-binding positions include Asn71, 74-75 (YE), Cys129, Thr164, Asn214, Arg219, and 230-232 (GIK).

The protein belongs to the MsrP family. In terms of assembly, heterodimer of a catalytic subunit (MsrP) and a heme-binding subunit (MsrQ). Mo-molybdopterin is required as a cofactor. Post-translationally, predicted to be exported by the Tat system. The position of the signal peptide cleavage has not been experimentally proven.

The protein localises to the periplasm. It carries out the reaction L-methionyl-[protein] + a quinone + H2O = L-methionyl-(S)-S-oxide-[protein] + a quinol. The enzyme catalyses L-methionyl-[protein] + a quinone + H2O = L-methionyl-(R)-S-oxide-[protein] + a quinol. Part of the MsrPQ system that repairs oxidized periplasmic proteins containing methionine sulfoxide residues (Met-O), using respiratory chain electrons. Thus protects these proteins from oxidative-stress damage caused by reactive species of oxygen and chlorine generated by the host defense mechanisms. MsrPQ is essential for the maintenance of envelope integrity under bleach stress, rescuing a wide series of structurally unrelated periplasmic proteins from methionine oxidation. The catalytic subunit MsrP is non-stereospecific, being able to reduce both (R-) and (S-) diastereoisomers of methionine sulfoxide. This is Protein-methionine-sulfoxide reductase catalytic subunit MsrP from Rhizobium etli (strain ATCC 51251 / DSM 11541 / JCM 21823 / NBRC 15573 / CFN 42).